A 348-amino-acid chain; its full sequence is Lysophosphatidic acid receptor 2 (348 aa).

Residues 1 to 30 (MGQCYYNETIGFFYNNSGKELSSHWRPKDV) are Extracellular-facing. N-linked (GlcNAc...) asparagine glycans are attached at residues Asn7 and Asn15. The helical transmembrane segment at 31-51 (VVVALGLTVSVLVLLTNLLVI) threads the bilayer. The Cytoplasmic segment spans residues 52–66 (AAIASNRRFHQPIYY). A helical membrane pass occupies residues 67-87 (LLGNLAAADLFAGVAYLFLMF). The Extracellular segment spans residues 88-100 (HTGPRTARLSLEG). The chain crosses the membrane as a helical span at residues 101–123 (WFLRQGLLDTSLTASVATLLAIA). At 124–143 (VERHRSVMAVQLHSRLPRGR) the chain is on the cytoplasmic side. The chain crosses the membrane as a helical span at residues 144–164 (VVMLIVGVWVAALGLGLLPAH). Residues 165-185 (SWHCLCALDRCSRMAPLLSRS) are Extracellular-facing. The chain crosses the membrane as a helical span at residues 186–206 (YLAVWALSSLLVFLLMVAVYT). At 207 to 239 (RIFFYVRRRVQRMAEHVSCHPRYRETTLSLVKT) the chain is on the cytoplasmic side. The helical transmembrane segment at 240-260 (VVIILGAFVVCWTPGQVVLLL) threads the bilayer. Residues 261 to 276 (DGLGCESCNVLAVEKY) are Extracellular-facing. Residues 277-294 (FLLLAEANSLVNAAVYSC) traverse the membrane as a helical segment. Topologically, residues 295-348 (RDAEMRRTFRRLLCCACLRQSTRESVHYTSSAQGGASTRIMLPENGHPLMDSTL) are cytoplasmic. Cys308 is lipidated: S-palmitoyl cysteine. The PDZ-binding motif lies at 345–348 (DSTL).

This sequence belongs to the G-protein coupled receptor 1 family. In terms of assembly, interacts with SLC9A3R2/NHERF2, MAGI3 and PLCB3. Interacts with RALA and GRK2. Expressed most abundantly in testes and peripheral blood leukocytes with less expression in pancreas, spleen, thymus and prostate. Little or no expression in heart, brain, placenta, lung, liver, skeletal muscle, kidney, ovary, small intestine, or colon.

Its subcellular location is the cell surface. It localises to the cell membrane. Functionally, receptor for lysophosphatidic acid (LPA), a mediator of diverse cellular activities. Seems to be coupled to the G(i)/G(o), G(12)/G(13), and G(q) families of heteromeric G proteins. Plays a key role in phospholipase C-beta (PLC-beta) signaling pathway. Stimulates phospholipase C (PLC) activity in a manner that is independent of RALA activation. This Homo sapiens (Human) protein is Lysophosphatidic acid receptor 2.